Consider the following 112-residue polypeptide: Thioredoxin (112 aa).

One can recognise a Thioredoxin domain in the interval 2–112; it reads SEDSATVAVT…ALLRELSDAL (111 aa). Cysteines 35 and 38 form a disulfide.

This sequence belongs to the thioredoxin family.

Participates in various redox reactions through the reversible oxidation of its active center dithiol to a disulfide and catalyzes dithiol-disulfide exchange reactions. This Mycolicibacterium smegmatis (Mycobacterium smegmatis) protein is Thioredoxin (trxA).